The following is a 473-amino-acid chain: Pup--protein ligase (473 aa).

Glutamate 9 serves as a coordination point for Mg(2+). ATP is bound at residue arginine 54. A Mg(2+)-binding site is contributed by tyrosine 56. Aspartate 58 serves as the catalytic Proton acceptor. Glutamate 64 is a Mg(2+) binding site. ATP is bound by residues threonine 67 and tryptophan 425.

Belongs to the Pup ligase/Pup deamidase family. Pup-conjugating enzyme subfamily.

It catalyses the reaction ATP + [prokaryotic ubiquitin-like protein]-L-glutamate + [protein]-L-lysine = ADP + phosphate + N(6)-([prokaryotic ubiquitin-like protein]-gamma-L-glutamyl)-[protein]-L-lysine.. It functions in the pathway protein degradation; proteasomal Pup-dependent pathway. It participates in protein modification; protein pupylation. Catalyzes the covalent attachment of the prokaryotic ubiquitin-like protein modifier Pup to the proteasomal substrate proteins, thereby targeting them for proteasomal degradation. This tagging system is termed pupylation. The ligation reaction involves the side-chain carboxylate of the C-terminal glutamate of Pup and the side-chain amino group of a substrate lysine. The protein is Pup--protein ligase of Brachybacterium faecium (strain ATCC 43885 / DSM 4810 / JCM 11609 / LMG 19847 / NBRC 14762 / NCIMB 9860 / 6-10).